The sequence spans 104 residues: Secreted RxLR effector protein 54 (104 aa).

A signal peptide spans 1–19 (MIFTLLGLALVATKSACIA). Residues 52–55 (RSLR) carry the RxLR motif. N-linked (GlcNAc...) asparagine glycosylation is present at Asn-64.

It belongs to the RxLR effector family.

The protein resides in the secreted. Its subcellular location is the host chloroplast envelope. The protein localises to the host mitochondrion. It localises to the host nucleus. It is found in the host cytoplasm. Its function is as follows. Secreted effector that completely suppresses the host cell death induced by cell death-inducing proteins. The protein is Secreted RxLR effector protein 54 of Plasmopara viticola (Downy mildew of grapevine).